Reading from the N-terminus, the 463-residue chain is Argininosuccinate lyase (463 aa).

Belongs to the lyase 1 family. Argininosuccinate lyase subfamily.

The protein resides in the cytoplasm. The catalysed reaction is 2-(N(omega)-L-arginino)succinate = fumarate + L-arginine. It functions in the pathway amino-acid biosynthesis; L-arginine biosynthesis; L-arginine from L-ornithine and carbamoyl phosphate: step 3/3. The protein is Argininosuccinate lyase of Bacillus cereus (strain AH187).